Consider the following 213-residue polypeptide: Orotate phosphoribosyltransferase (213 aa).

Position 26 (lysine 26) interacts with 5-phospho-alpha-D-ribose 1-diphosphate. 34 to 35 (FF) is a binding site for orotate. 5-phospho-alpha-D-ribose 1-diphosphate-binding positions include 72-73 (YK), arginine 99, lysine 100, lysine 103, histidine 105, and 124-132 (DDVITAGTA). Residues threonine 128 and arginine 156 each contribute to the orotate site.

The protein belongs to the purine/pyrimidine phosphoribosyltransferase family. PyrE subfamily. In terms of assembly, homodimer. It depends on Mg(2+) as a cofactor.

The enzyme catalyses orotidine 5'-phosphate + diphosphate = orotate + 5-phospho-alpha-D-ribose 1-diphosphate. Its pathway is pyrimidine metabolism; UMP biosynthesis via de novo pathway; UMP from orotate: step 1/2. In terms of biological role, catalyzes the transfer of a ribosyl phosphate group from 5-phosphoribose 1-diphosphate to orotate, leading to the formation of orotidine monophosphate (OMP). This is Orotate phosphoribosyltransferase from Shigella dysenteriae serotype 1 (strain Sd197).